Here is a 332-residue protein sequence, read N- to C-terminus: Glycerol-3-phosphate dehydrogenase [NAD(P)+] (332 aa).

4 residues coordinate NADPH: Ser10, Trp11, Lys31, and Lys105. Lys105, Gly136, and Ser138 together coordinate sn-glycerol 3-phosphate. Ala140 contacts NADPH. Sn-glycerol 3-phosphate is bound by residues Lys191, Asp244, Ser254, Arg255, and Asn256. Lys191 acts as the Proton acceptor in catalysis. Arg255 is an NADPH binding site. Val279 and Glu281 together coordinate NADPH.

It belongs to the NAD-dependent glycerol-3-phosphate dehydrogenase family.

The protein resides in the cytoplasm. It carries out the reaction sn-glycerol 3-phosphate + NAD(+) = dihydroxyacetone phosphate + NADH + H(+). It catalyses the reaction sn-glycerol 3-phosphate + NADP(+) = dihydroxyacetone phosphate + NADPH + H(+). It functions in the pathway membrane lipid metabolism; glycerophospholipid metabolism. Functionally, catalyzes the reduction of the glycolytic intermediate dihydroxyacetone phosphate (DHAP) to sn-glycerol 3-phosphate (G3P), the key precursor for phospholipid synthesis. The protein is Glycerol-3-phosphate dehydrogenase [NAD(P)+] of Anaeromyxobacter dehalogenans (strain 2CP-C).